The primary structure comprises 275 residues: Gene 18 protein (275 aa).

Belongs to the herpesviridae UL79 family.

The sequence is that of Gene 18 protein (18) from Connochaetes taurinus (Blue wildebeest).